The sequence spans 883 residues: MVDTKTPGDKTLTMPTKTLTLKPRVEQGVVRQSFSHGRSKQVVVEKRGKRRLGGDEPAAPAAPEVAKKPAPAPAAPPRQQQSRPAPQQSRSGMVLRTLTEDERTARATALADARVREIEERKQAEIEAQRRAEQEKIEKAEREAAEARRKAEEERHRQEDEAKRKAETEAKKRFGDAEPAKKPAETSTTTTTAAPARPATTTTRTPTPAGRPPAVAAEAGDDDEAPRMIRRPGGPARPAPPPKQPAAKPGASKQRGRLTVVTALNADDVRERSIASFRRRTQRLKGHASNEPKEKLVREVVIPEVIAIQELANRMSERAVDVIRLLMKQGAMHKITDVIDADTAQLIAEELGHTVKRVAASDVEEGLFDVVDDSTDTEPRSPVVTVMGHVDHGKTSLLDALRHANVVSGEAGGITQHIGAYQVTSPESGKKITFIDTPGHAAFTAMRARGAKVTDIVVLVVAADDGVMPQTIEAINHAKAAGVPIIVAINKIDKPDAKPDRVRTDLLQHNVQVESMGGDVVDVEVSAKNKINLDKLLEMIALQAEILELKTNTQRPAEGTVIEAKLDRGRGPVATVLVQRGTLRVGDIIVAGAEMGRVRALISDQGETVQEAGPSVPVEVLGFNGPPEAGDRLAVVENEARARQITDYRAHQKREKSAASVSGMRGSLEQMMTQLKTSGRKEFPLIVKADVQGSLEAILGSLEKLGTDEVAARILHAGVGGISESDVTLAEGFNAVILGFSVRANKEAAAAAKRNGIEIRYYNIIYDLVDDIKKAMSGLLAPTLRETMLGNAQILEIFNISKVGKVAGCRVTDGTVERGANVRLIRDNVVVHEGKLSTLKRFKDEVKEVVAGQECGMAFENYTDMRAGDIIECYRVETIQRSL.

The interval 1 to 259 (MVDTKTPGDK…GASKQRGRLT (259 aa)) is disordered. 2 stretches are compositionally biased toward low complexity: residues 10–22 (KTLT…LTLK) and 77–89 (PRQQ…PQQS). A compositionally biased stretch (basic and acidic residues) spans 113-184 (ARVREIEERK…GDAEPAKKPA (72 aa)). The span at 185 to 218 (ETSTTTTTAAPARPATTTTRTPTPAGRPPAVAAE) shows a compositional bias: low complexity. The span at 235 to 244 (PARPAPPPKQ) shows a compositional bias: pro residues. Positions 379–548 (PRSPVVTVMG…MIALQAEILE (170 aa)) constitute a tr-type G domain. The tract at residues 388–395 (GHVDHGKT) is G1. 388-395 (GHVDHGKT) lines the GTP pocket. The interval 413–417 (GITQH) is G2. The interval 436 to 439 (DTPG) is G3. GTP is bound by residues 436-440 (DTPGH) and 490-493 (NKID). Positions 490-493 (NKID) are G4. A G5 region spans residues 526-528 (SAK).

Belongs to the TRAFAC class translation factor GTPase superfamily. Classic translation factor GTPase family. IF-2 subfamily.

It localises to the cytoplasm. Its function is as follows. One of the essential components for the initiation of protein synthesis. Protects formylmethionyl-tRNA from spontaneous hydrolysis and promotes its binding to the 30S ribosomal subunits. Also involved in the hydrolysis of GTP during the formation of the 70S ribosomal complex. In Rhodopseudomonas palustris (strain ATCC BAA-98 / CGA009), this protein is Translation initiation factor IF-2.